Consider the following 162-residue polypeptide: Glutathione peroxidase-like peroxiredoxin GPX5 (162 aa).

Cys-38 is subject to S-selanylcysteine. Asn-87 is an active-site residue.

It belongs to the glutathione peroxidase family. Cys-87 is S-selanylated when selenium levels are high. S-selanylation may increase or be important for glutathione peroxidase activity.

It localises to the cytoplasm. The catalysed reaction is 2 glutathione + H2O2 = glutathione disulfide + 2 H2O. It carries out the reaction a hydroperoxide + [thioredoxin]-dithiol = an alcohol + [thioredoxin]-disulfide + H2O. Functionally, has thioredoxin peroxidase activity. May also have glutathione peroxidase activity, although this activity is controversial. Protects cells against reactive oxygen species, which may include photooxidative stress, hydrogen peroxide and organic hydroperoxides. The polypeptide is Glutathione peroxidase-like peroxiredoxin GPX5 (Chlamydomonas reinhardtii (Chlamydomonas smithii)).